A 121-amino-acid chain; its full sequence is Large ribosomal subunit protein bL20 (121 aa).

It belongs to the bacterial ribosomal protein bL20 family.

Binds directly to 23S ribosomal RNA and is necessary for the in vitro assembly process of the 50S ribosomal subunit. It is not involved in the protein synthesizing functions of that subunit. This Koribacter versatilis (strain Ellin345) protein is Large ribosomal subunit protein bL20.